We begin with the raw amino-acid sequence, 213 residues long: 3-hexulose-6-phosphate synthase 2 (213 aa).

This sequence belongs to the HPS/KGPDC family. HPS subfamily.

The catalysed reaction is D-ribulose 5-phosphate + formaldehyde = D-arabino-hex-3-ulose 6-phosphate. It functions in the pathway one-carbon metabolism; formaldehyde assimilation via RuMP pathway; D-fructose 6-phosphate from D-ribulose 5-phosphate and formaldehyde: step 1/2. Its function is as follows. Catalyzes the condensation of ribulose 5-phosphate with formaldehyde to form 3-hexulose 6-phosphate. This is 3-hexulose-6-phosphate synthase 2 from Staphylococcus saprophyticus subsp. saprophyticus (strain ATCC 15305 / DSM 20229 / NCIMB 8711 / NCTC 7292 / S-41).